The chain runs to 211 residues: Thiamine-phosphate synthase (211 aa).

Residues 37–41 (QLRIK) and Asn69 each bind 4-amino-2-methyl-5-(diphosphooxymethyl)pyrimidine. Mg(2+) contacts are provided by Asp70 and Asp89. A 4-amino-2-methyl-5-(diphosphooxymethyl)pyrimidine-binding site is contributed by Ser108. 134–136 (TQT) contributes to the 2-[(2R,5Z)-2-carboxy-4-methylthiazol-5(2H)-ylidene]ethyl phosphate binding site. Lys137 lines the 4-amino-2-methyl-5-(diphosphooxymethyl)pyrimidine pocket. 2-[(2R,5Z)-2-carboxy-4-methylthiazol-5(2H)-ylidene]ethyl phosphate contacts are provided by residues Gly166 and 186-187 (VS).

It belongs to the thiamine-phosphate synthase family. It depends on Mg(2+) as a cofactor.

The catalysed reaction is 2-[(2R,5Z)-2-carboxy-4-methylthiazol-5(2H)-ylidene]ethyl phosphate + 4-amino-2-methyl-5-(diphosphooxymethyl)pyrimidine + 2 H(+) = thiamine phosphate + CO2 + diphosphate. It catalyses the reaction 2-(2-carboxy-4-methylthiazol-5-yl)ethyl phosphate + 4-amino-2-methyl-5-(diphosphooxymethyl)pyrimidine + 2 H(+) = thiamine phosphate + CO2 + diphosphate. It carries out the reaction 4-methyl-5-(2-phosphooxyethyl)-thiazole + 4-amino-2-methyl-5-(diphosphooxymethyl)pyrimidine + H(+) = thiamine phosphate + diphosphate. It participates in cofactor biosynthesis; thiamine diphosphate biosynthesis; thiamine phosphate from 4-amino-2-methyl-5-diphosphomethylpyrimidine and 4-methyl-5-(2-phosphoethyl)-thiazole: step 1/1. Functionally, condenses 4-methyl-5-(beta-hydroxyethyl)thiazole monophosphate (THZ-P) and 2-methyl-4-amino-5-hydroxymethyl pyrimidine pyrophosphate (HMP-PP) to form thiamine monophosphate (TMP). This is Thiamine-phosphate synthase from Shigella dysenteriae serotype 1 (strain Sd197).